A 146-amino-acid chain; its full sequence is 3-dehydroquinate dehydratase (146 aa).

The active-site Proton acceptor is the Tyr23. Substrate is bound by residues Asn79, His85, and Asp92. Residue His105 is the Proton donor of the active site. Substrate is bound by residues 106 to 107 and Arg116; that span reads IS.

This sequence belongs to the type-II 3-dehydroquinase family. As to quaternary structure, homododecamer.

It catalyses the reaction 3-dehydroquinate = 3-dehydroshikimate + H2O. It functions in the pathway metabolic intermediate biosynthesis; chorismate biosynthesis; chorismate from D-erythrose 4-phosphate and phosphoenolpyruvate: step 3/7. Functionally, catalyzes a trans-dehydration via an enolate intermediate. The chain is 3-dehydroquinate dehydratase from Variovorax paradoxus (strain S110).